The following is a 245-amino-acid chain: Probable phosphatase YcdX (245 aa).

9 residues coordinate Zn(2+): His-7, His-9, His-15, His-40, Glu-73, His-101, His-131, Asp-192, and His-194.

This sequence belongs to the PHP family. In terms of assembly, homotrimer. Zn(2+) serves as cofactor.

The polypeptide is Probable phosphatase YcdX (Escherichia coli O17:K52:H18 (strain UMN026 / ExPEC)).